Here is a 327-residue protein sequence, read N- to C-terminus: Urease accessory protein UreD (327 aa).

This sequence belongs to the UreD family. In terms of assembly, ureD, UreF and UreG form a complex that acts as a GTP-hydrolysis-dependent molecular chaperone, activating the urease apoprotein by helping to assemble the nickel containing metallocenter of UreC. The UreE protein probably delivers the nickel.

The protein resides in the cytoplasm. Required for maturation of urease via the functional incorporation of the urease nickel metallocenter. The protein is Urease accessory protein UreD of Yersinia enterocolitica serotype O:8 / biotype 1B (strain NCTC 13174 / 8081).